Here is a 209-residue protein sequence, read N- to C-terminus: Thiamine-phosphate synthase (209 aa).

Residues glutamine 36–lysine 40 and asparagine 68 each bind 4-amino-2-methyl-5-(diphosphooxymethyl)pyrimidine. Mg(2+)-binding residues include aspartate 69 and aspartate 87. 4-amino-2-methyl-5-(diphosphooxymethyl)pyrimidine is bound at residue threonine 106. Serine 133–threonine 135 is a binding site for 2-[(2R,5Z)-2-carboxy-4-methylthiazol-5(2H)-ylidene]ethyl phosphate. Residue lysine 136 coordinates 4-amino-2-methyl-5-(diphosphooxymethyl)pyrimidine. Glycine 163 serves as a coordination point for 2-[(2R,5Z)-2-carboxy-4-methylthiazol-5(2H)-ylidene]ethyl phosphate.

The protein belongs to the thiamine-phosphate synthase family. It depends on Mg(2+) as a cofactor.

The catalysed reaction is 2-[(2R,5Z)-2-carboxy-4-methylthiazol-5(2H)-ylidene]ethyl phosphate + 4-amino-2-methyl-5-(diphosphooxymethyl)pyrimidine + 2 H(+) = thiamine phosphate + CO2 + diphosphate. The enzyme catalyses 2-(2-carboxy-4-methylthiazol-5-yl)ethyl phosphate + 4-amino-2-methyl-5-(diphosphooxymethyl)pyrimidine + 2 H(+) = thiamine phosphate + CO2 + diphosphate. It catalyses the reaction 4-methyl-5-(2-phosphooxyethyl)-thiazole + 4-amino-2-methyl-5-(diphosphooxymethyl)pyrimidine + H(+) = thiamine phosphate + diphosphate. It participates in cofactor biosynthesis; thiamine diphosphate biosynthesis; thiamine phosphate from 4-amino-2-methyl-5-diphosphomethylpyrimidine and 4-methyl-5-(2-phosphoethyl)-thiazole: step 1/1. Functionally, condenses 4-methyl-5-(beta-hydroxyethyl)thiazole monophosphate (THZ-P) and 2-methyl-4-amino-5-hydroxymethyl pyrimidine pyrophosphate (HMP-PP) to form thiamine monophosphate (TMP). The protein is Thiamine-phosphate synthase of Pseudomonas aeruginosa (strain UCBPP-PA14).